The chain runs to 279 residues: Biotin synthase (279 aa).

The Radical SAM core domain occupies 2–232; sequence VRNSRLDICS…NVTIKIAAGR (231 aa). Residues cysteine 20, cysteine 24, and cysteine 27 each coordinate [4Fe-4S] cluster. Positions 96, 156, and 227 each coordinate [2Fe-2S] cluster.

It belongs to the radical SAM superfamily. Biotin synthase family. In terms of assembly, homodimer. Requires [4Fe-4S] cluster as cofactor. [2Fe-2S] cluster is required as a cofactor.

It carries out the reaction (4R,5S)-dethiobiotin + (sulfur carrier)-SH + 2 reduced [2Fe-2S]-[ferredoxin] + 2 S-adenosyl-L-methionine = (sulfur carrier)-H + biotin + 2 5'-deoxyadenosine + 2 L-methionine + 2 oxidized [2Fe-2S]-[ferredoxin]. It functions in the pathway cofactor biosynthesis; biotin biosynthesis; biotin from 7,8-diaminononanoate: step 2/2. Its function is as follows. Catalyzes the conversion of dethiobiotin (DTB) to biotin by the insertion of a sulfur atom into dethiobiotin via a radical-based mechanism. The polypeptide is Biotin synthase (Thermotoga neapolitana (strain ATCC 49049 / DSM 4359 / NBRC 107923 / NS-E)).